Reading from the N-terminus, the 404-residue chain is uncharacterized protein (404 aa).

Residues 1–21 (MRKLGLALSIMGLLLVSIVAG) form the signal peptide. N-acetylcysteine is present on Cys-22. Residue Cys-22 is the site of S-archaeol cysteine attachment.

The protein belongs to the BMP lipoprotein family.

The protein resides in the cell membrane. This is an uncharacterized protein from Pyrococcus abyssi (strain GE5 / Orsay).